Here is a 145-residue protein sequence, read N- to C-terminus: Large ribosomal subunit protein uL16 (145 aa).

This sequence belongs to the universal ribosomal protein uL16 family. In terms of assembly, part of the 50S ribosomal subunit.

In terms of biological role, binds 23S rRNA and is also seen to make contacts with the A and possibly P site tRNAs. The protein is Large ribosomal subunit protein uL16 of Agathobacter rectalis (strain ATCC 33656 / DSM 3377 / JCM 17463 / KCTC 5835 / VPI 0990) (Eubacterium rectale).